The following is a 198-amino-acid chain: Endonuclease V (198 aa).

Mg(2+) is bound by residues D38 and D101.

This sequence belongs to the endonuclease V family. Requires Mg(2+) as cofactor.

It localises to the cytoplasm. It catalyses the reaction Endonucleolytic cleavage at apurinic or apyrimidinic sites to products with a 5'-phosphate.. In terms of biological role, DNA repair enzyme involved in the repair of deaminated bases. Selectively cleaves double-stranded DNA at the second phosphodiester bond 3' to a deoxyinosine leaving behind the intact lesion on the nicked DNA. This Saccharolobus islandicus (strain M.14.25 / Kamchatka #1) (Sulfolobus islandicus) protein is Endonuclease V.